The primary structure comprises 289 residues: uncharacterized protein (289 aa).

Residues 268–289 (SDDGYETQWSDGPYSIPSGLSD) form a disordered region.

This is an uncharacterized protein from Zea mays (Maize).